The sequence spans 359 residues: MSQVYNFSAGPAMLPIQVLRQMQDELLEYEDVKASIMEISHRSTDFIAMAQKSEQDLRDLMNIPNHYKVLFLQGGASAQFSMVPINLLHGKTKANYAYTGHWSKKAIVEGSRYCDVNICTNSSDNKYTDIDVFENWDIDPDGAYLHYTPNETIAGLEFDYVPEVDMPLVADMSSSILSREVDVSKYGVIYAGAQKNIGIAGLTVVIVREDLMGSVVANQPILFDYTIQAKNDSMYNTPSTYSWYVASRVFEWLKQQGGLSVIAKINQTKAKTLYDVIDGSNFYSNPVALKYRSWMNVPFLLADENLNGLFVEKAAINNLITLKGHRSVGGMRASIYNAMPQKGINELINFMKVFEKENS.

Arg-42 contributes to the L-glutamate binding site. Residues 76-77, Trp-102, Thr-152, Asp-171, and Gln-194 contribute to the pyridoxal 5'-phosphate site; that span reads AS. Lys-195 carries the N6-(pyridoxal phosphate)lysine modification. Pyridoxal 5'-phosphate is bound at residue 236 to 237; that stretch reads NT.

The protein belongs to the class-V pyridoxal-phosphate-dependent aminotransferase family. SerC subfamily. As to quaternary structure, homodimer. Pyridoxal 5'-phosphate is required as a cofactor.

The protein localises to the cytoplasm. It carries out the reaction O-phospho-L-serine + 2-oxoglutarate = 3-phosphooxypyruvate + L-glutamate. The enzyme catalyses 4-(phosphooxy)-L-threonine + 2-oxoglutarate = (R)-3-hydroxy-2-oxo-4-phosphooxybutanoate + L-glutamate. The protein operates within amino-acid biosynthesis; L-serine biosynthesis; L-serine from 3-phospho-D-glycerate: step 2/3. It participates in cofactor biosynthesis; pyridoxine 5'-phosphate biosynthesis; pyridoxine 5'-phosphate from D-erythrose 4-phosphate: step 3/5. Functionally, catalyzes the reversible conversion of 3-phosphohydroxypyruvate to phosphoserine and of 3-hydroxy-2-oxo-4-phosphonooxybutanoate to phosphohydroxythreonine. The sequence is that of Phosphoserine aminotransferase from Vesicomyosocius okutanii subsp. Calyptogena okutanii (strain HA).